A 320-amino-acid polypeptide reads, in one-letter code: uncharacterized protein (320 aa).

46 to 53 (DVPGVGKT) contributes to the ATP binding site.

This sequence belongs to the MoxR family.

This is an uncharacterized protein from Bacillus subtilis (strain 168).